Here is a 361-residue protein sequence, read N- to C-terminus: Chorismate synthase (361 aa).

2 residues coordinate NADP(+): Arg48 and Arg54. Residues 131–133 (RSS), 243–244 (NA), Gly287, 302–306 (KPTSS), and Arg328 contribute to the FMN site.

This sequence belongs to the chorismate synthase family. In terms of assembly, homotetramer. The cofactor is FMNH2.

It catalyses the reaction 5-O-(1-carboxyvinyl)-3-phosphoshikimate = chorismate + phosphate. The protein operates within metabolic intermediate biosynthesis; chorismate biosynthesis; chorismate from D-erythrose 4-phosphate and phosphoenolpyruvate: step 7/7. Its function is as follows. Catalyzes the anti-1,4-elimination of the C-3 phosphate and the C-6 proR hydrogen from 5-enolpyruvylshikimate-3-phosphate (EPSP) to yield chorismate, which is the branch point compound that serves as the starting substrate for the three terminal pathways of aromatic amino acid biosynthesis. This reaction introduces a second double bond into the aromatic ring system. In Rhodopseudomonas palustris (strain HaA2), this protein is Chorismate synthase.